The following is a 563-amino-acid chain: Arginine--tRNA ligase (563 aa).

The short motif at 121–131 (PNIAKPFSIGH) is the 'HIGH' region element.

The protein belongs to the class-I aminoacyl-tRNA synthetase family. In terms of assembly, monomer.

The protein localises to the cytoplasm. The enzyme catalyses tRNA(Arg) + L-arginine + ATP = L-arginyl-tRNA(Arg) + AMP + diphosphate. The protein is Arginine--tRNA ligase of Streptococcus pyogenes serotype M4 (strain MGAS10750).